A 283-amino-acid polypeptide reads, in one-letter code: Thymidylate synthase (283 aa).

Arg-22 provides a ligand contact to dUMP. Cys-160 serves as the catalytic Nucleophile. DUMP contacts are provided by residues Arg-180–Asp-183, Asn-191, and His-221–Tyr-223. Asp-183 is a (6R)-5,10-methylene-5,6,7,8-tetrahydrofolate binding site. Ser-282 is a binding site for (6R)-5,10-methylene-5,6,7,8-tetrahydrofolate.

It belongs to the thymidylate synthase family. Bacterial-type ThyA subfamily. In terms of assembly, homodimer.

The protein resides in the cytoplasm. The enzyme catalyses dUMP + (6R)-5,10-methylene-5,6,7,8-tetrahydrofolate = 7,8-dihydrofolate + dTMP. Its pathway is pyrimidine metabolism; dTTP biosynthesis. Functionally, catalyzes the reductive methylation of 2'-deoxyuridine-5'-monophosphate (dUMP) to 2'-deoxythymidine-5'-monophosphate (dTMP) while utilizing 5,10-methylenetetrahydrofolate (mTHF) as the methyl donor and reductant in the reaction, yielding dihydrofolate (DHF) as a by-product. This enzymatic reaction provides an intracellular de novo source of dTMP, an essential precursor for DNA biosynthesis. The polypeptide is Thymidylate synthase (Aliivibrio fischeri (strain ATCC 700601 / ES114) (Vibrio fischeri)).